The primary structure comprises 150 residues: Deoxyuridine 5'-triphosphate nucleotidohydrolase (150 aa).

Substrate is bound by residues 69–71 (RSG), Asn-82, 86–88 (LID), and Met-96.

Belongs to the dUTPase family. It depends on Mg(2+) as a cofactor.

The catalysed reaction is dUTP + H2O = dUMP + diphosphate + H(+). It functions in the pathway pyrimidine metabolism; dUMP biosynthesis; dUMP from dCTP (dUTP route): step 2/2. In terms of biological role, this enzyme is involved in nucleotide metabolism: it produces dUMP, the immediate precursor of thymidine nucleotides and it decreases the intracellular concentration of dUTP so that uracil cannot be incorporated into DNA. This is Deoxyuridine 5'-triphosphate nucleotidohydrolase from Alcanivorax borkumensis (strain ATCC 700651 / DSM 11573 / NCIMB 13689 / SK2).